The chain runs to 389 residues: NAD-dependent protein deacetylase sirtuin-2 (389 aa).

Positions 1 to 34 (MAEPDPSDPLETQAGKVQEAQDSDSDTEGGATGG) are disordered. The residue at position 2 (A2) is an N-acetylalanine. Phosphoserine occurs at positions 23 and 25. T27 is modified (phosphothreonine). The short motif at 41–51 (LRNLFTQTLGL) is the Nuclear export signal element. S53 carries the phosphoserine modification. The Deacetylase sirtuin-type domain maps to 57–338 (RLLDELTLEG…LALADLLGWK (282 aa)). NAD(+) contacts are provided by residues 85-89 (AGIST) and 95-97 (DFR). Position 100 is a phosphoserine (S100). 167-170 (QNID) serves as a coordination point for NAD(+). The Proton acceptor role is filled by H187. Residues C195, C200, C221, and C224 each coordinate Zn(2+). NAD(+) contacts are provided by residues 262 to 263 (TS), 286 to 288 (NKE), and C324. Residues 350–389 (ANIDAQSGSQAPNPSTTISPGKSPPPAKEAARTKEKEEQQ) form a disordered region. A compositionally biased stretch (polar residues) spans 353–369 (DAQSGSQAPNPSTTISP). 2 positions are modified to phosphoserine: S368 and S372. Positions 378 to 389 (EAARTKEKEEQQ) are enriched in basic and acidic residues.

Belongs to the sirtuin family. Class I subfamily. In terms of assembly, interacts with CDC20, FOXO3 and FZR1. Associates with microtubule in primary cortical mature neurons. Homotrimer. Interacts (via both phosphorylated, unphosphorylated, active or inactive forms) with HDAC6; the interaction is necessary for the complex to interact with alpha-tubulin, suggesting that these proteins belong to a large complex that deacetylates the cytoskeleton. Interacts with FOXO1; the interaction is disrupted upon serum-starvation or oxidative stress, leading to increased level of acetylated FOXO1 and induction of autophagy. Interacts with RELA; the interaction occurs in the cytoplasm and is increased in a TNF-alpha-dependent manner. Interacts with HOXA10; the interaction is direct. Interacts with YWHAB and YWHAG; the interactions occur in a AKT-dependent manner and increase SIRT2-dependent TP53 deacetylation. Interacts with MAPK1/ERK2 and MAPK3/ERK1; the interactions increase SIRT2 stability and deacetylation activity. Interacts (phosphorylated form) with KMT5A isoform 2; the interaction is direct, stimulates KMT5A-mediated methyltransferase activity on histone at 'Lys-20' (H4K20me1) and is increased in a H(2)O(2)-induced oxidative stress-dependent manner. Interacts with G6PD; the interaction is enhanced by H(2)O(2) treatment. Interacts with a G1/S-specific cyclin E-CDK2 complex. Interacts with AURKA, CDK5R1 (p35 form) and CDK5 and HIF1A. Interacts with the tRNA ligase SARS1; recruited to the VEGFA promoter via interaction with SARS1. Isoform 2 and isoform 4 associate with microtubules in primary cortical mature neurons. Interacts with BEX4; negatively regulates alpha-tubulin deacetylation by SIRT2. It depends on Zn(2+) as a cofactor. Phosphorylated at phosphoserine and phosphothreonine. Phosphorylated at Ser-368 by a mitotic kinase CDK1/cyclin B at the G2/M transition; phosphorylation regulates the delay in cell-cycle progression. Phosphorylated at Ser-368 by a mitotic kinase G1/S-specific cyclin E/Cdk2 complex; phosphorylation inactivates SIRT2-mediated alpha-tubulin deacetylation and thereby negatively regulates cell adhesion, cell migration and neurite outgrowth during neuronal differentiation. Phosphorylated by cyclin A/Cdk2 and p35-Cdk5 complexes and to a lesser extent by the cyclin D3/Cdk4 and cyclin B/Cdk1, in vitro. Dephosphorylated at Ser-368 by CDC14A and CDC14B around early anaphase. In terms of processing, acetylated by EP300; acetylation leads both to the decreased of SIRT2-mediated alpha-tubulin deacetylase activity and SIRT2-mediated down-regulation of TP53 transcriptional activity. Post-translationally, ubiquitinated. Isoform 1 is weakly expressed in the cortex at postnatal(P) days P1, P3 and P7, and increases progressively between P17 and older adult cortex. Isoform 1 is also expressed in heart, liver and skeletal muscle, weakly expressed in the striatum and spinal cord. Isoform 2 is not expressed in the cortex at P1, P3 and P7, and increases strongly and progressively between P17 and older adult cortex. Isoform 2 is also expressed in the heart, liver, striatum and spinal cord. Isoform 4 is weakly expressed in older adult cortex and spinal cords. Expressed in the cortex. Expressed in postnatal sciatic nerves during myelination and during remyelination after nerve injury. Expressed in neurons, oligodendrocytes, Schwann cells, Purkinje cells and in astrocytes of white matter. Strongly expressed in preadipocytes compared with differentiated adipocytes. Expressed in cerebellar granule cells. Expressed in the inner ear: in the cochlea, expressed in types I and V fibrocytes in the spiral ligament (SL) and slightly in stria vascularis (SV); in the organ of Corti, expressed in some supporting cells; in the crista ampullaris, expressed in spiral ganglion cells; also expressed in the endolymphatic sac (ES) epithelial cells (at protein level). Expressed in the brain, spinal cord, optic nerve and hippocampus. Strongly expressed in 6-8 week-old ovulated meiosis II oocytes and weakly expressed in 45-58 week-old ovulated meiosis II oocytes. Expressed in the cochlea, vestibule and acoustic nerve of the inner ear.

It is found in the nucleus. It localises to the cytoplasm. Its subcellular location is the perinuclear region. The protein resides in the perikaryon. The protein localises to the cytoskeleton. It is found in the cell projection. It localises to the growth cone. Its subcellular location is the myelin membrane. The protein resides in the microtubule organizing center. The protein localises to the centrosome. It is found in the spindle. It localises to the chromosome. Its subcellular location is the midbody. The protein resides in the centriole. The catalysed reaction is N(6)-acetyl-L-lysyl-[protein] + NAD(+) + H2O = 2''-O-acetyl-ADP-D-ribose + nicotinamide + L-lysyl-[protein]. It catalyses the reaction N(6)-tetradecanoyl-L-lysyl-[protein] + NAD(+) + H2O = 2''-O-tetradecanoyl-ADP-D-ribose + nicotinamide + L-lysyl-[protein]. It carries out the reaction N(6)-hexadecanoyl-L-lysyl-[protein] + NAD(+) + H2O = 2''-O-hexadecanoyl-ADP-D-ribose + nicotinamide + L-lysyl-[protein]. Its activity is regulated as follows. Inhibited by Sirtinol, A3 and M15 small molecules. Inhibited by nicotinamide. Inhibited by a macrocyclic peptide inhibitor S2iL5. Inhibited by EP300-induced acetylation. Functionally, NAD-dependent protein deacetylase, which deacetylates internal lysines on histone and alpha-tubulin as well as many other proteins such as key transcription factors. Participates in the modulation of multiple and diverse biological processes such as cell cycle control, genomic integrity, microtubule dynamics, cell differentiation, metabolic networks, and autophagy. Plays a major role in the control of cell cycle progression and genomic stability. Functions in the antephase checkpoint preventing precocious mitotic entry in response to microtubule stress agents, and hence allowing proper inheritance of chromosomes. Positively regulates the anaphase promoting complex/cyclosome (APC/C) ubiquitin ligase complex activity by deacetylating CDC20 and FZR1, then allowing progression through mitosis. Associates both with chromatin at transcriptional start sites (TSSs) and enhancers of active genes. Plays a role in cell cycle and chromatin compaction through epigenetic modulation of the regulation of histone H4 'Lys-20' methylation (H4K20me1) during early mitosis. Specifically deacetylates histone H4 at 'Lys-16' (H4K16ac) between the G2/M transition and metaphase enabling H4K20me1 deposition by KMT5A leading to ulterior levels of H4K20me2 and H4K20me3 deposition throughout cell cycle, and mitotic S-phase progression. Deacetylates KMT5A modulating KMT5A chromatin localization during the mitotic stress response. Also deacetylates histone H3 at 'Lys-57' (H3K56ac) during the mitotic G2/M transition. During oocyte meiosis progression, may deacetylate histone H4 at 'Lys-16' (H4K16ac) and alpha-tubulin, regulating spindle assembly and chromosome alignment by influencing microtubule dynamics and kinetochore function. Deacetylates histone H4 at 'Lys-16' (H4K16ac) at the VEGFA promoter and thereby contributes to regulate expression of VEGFA, a key regulator of angiogenesis. Deacetylates alpha-tubulin at 'Lys-40' and hence controls neuronal motility, oligodendroglial cell arbor projection processes and proliferation of non-neuronal cells. Phosphorylation at Ser-368 by a G1/S-specific cyclin E-CDK2 complex inactivates SIRT2-mediated alpha-tubulin deacetylation, negatively regulating cell adhesion, cell migration and neurite outgrowth during neuronal differentiation. Deacetylates PARD3 and participates in the regulation of Schwann cell peripheral myelination formation during early postnatal development and during postinjury remyelination. Involved in several cellular metabolic pathways. Plays a role in the regulation of blood glucose homeostasis by deacetylating and stabilizing phosphoenolpyruvate carboxykinase PCK1 activity in response to low nutrient availability. Acts as a key regulator in the pentose phosphate pathway (PPP) by deacetylating and activating the glucose-6-phosphate G6PD enzyme, and therefore, stimulates the production of cytosolic NADPH to counteract oxidative damage. Maintains energy homeostasis in response to nutrient deprivation as well as energy expenditure by inhibiting adipogenesis and promoting lipolysis. Attenuates adipocyte differentiation by deacetylating and promoting FOXO1 interaction to PPARG and subsequent repression of PPARG-dependent transcriptional activity. Plays a role in the regulation of lysosome-mediated degradation of protein aggregates by autophagy in neuronal cells. Deacetylates FOXO1 in response to oxidative stress or serum deprivation, thereby negatively regulating FOXO1-mediated autophagy. Deacetylates a broad range of transcription factors and co-regulators regulating target gene expression. Deacetylates transcriptional factor FOXO3 stimulating the ubiquitin ligase SCF(SKP2)-mediated FOXO3 ubiquitination and degradation. Deacetylates HIF1A and therefore promotes HIF1A degradation and inhibition of HIF1A transcriptional activity in tumor cells in response to hypoxia. Deacetylates RELA in the cytoplasm inhibiting NF-kappaB-dependent transcription activation upon TNF-alpha stimulation. Inhibits transcriptional activation by deacetylating p53/TP53 and EP300. Also deacetylates EIF5A. Functions as a negative regulator on oxidative stress-tolerance in response to anoxia-reoxygenation conditions. Plays a role as tumor suppressor. In addition to protein deacetylase activity, also has activity toward long-chain fatty acyl groups and mediates protein-lysine demyristoylation and depalmitoylation of target proteins, such as ARF6 and KRAS, thereby regulating their association with membranes. Its function is as follows. Deacetylates alpha-tubulin. The chain is NAD-dependent protein deacetylase sirtuin-2 (Sirt2) from Mus musculus (Mouse).